The following is a 55-amino-acid chain: ATP synthase F(0) complex subunit 8 (55 aa).

A helical transmembrane segment spans residues 7–29 (NPWFYIMLMSWLTFSLIIQPELL).

The protein belongs to the ATPase protein 8 family. Component of the ATP synthase complex composed at least of ATP5F1A/subunit alpha, ATP5F1B/subunit beta, ATP5MC1/subunit c (homooctomer), MT-ATP6/subunit a, MT-ATP8/subunit 8, ATP5ME/subunit e, ATP5MF/subunit f, ATP5MG/subunit g, ATP5MK/subunit k, ATP5MJ/subunit j, ATP5F1C/subunit gamma, ATP5F1D/subunit delta, ATP5F1E/subunit epsilon, ATP5PF/subunit F6, ATP5PB/subunit b, ATP5PD/subunit d, ATP5PO/subunit OSCP. ATP synthase complex consists of a soluble F(1) head domain (subunits alpha(3) and beta(3)) - the catalytic core - and a membrane F(0) domain - the membrane proton channel (subunits c, a, 8, e, f, g, k and j). These two domains are linked by a central stalk (subunits gamma, delta, and epsilon) rotating inside the F1 region and a stationary peripheral stalk (subunits F6, b, d, and OSCP).

It is found in the mitochondrion membrane. Subunit 8, of the mitochondrial membrane ATP synthase complex (F(1)F(0) ATP synthase or Complex V) that produces ATP from ADP in the presence of a proton gradient across the membrane which is generated by electron transport complexes of the respiratory chain. ATP synthase complex consist of a soluble F(1) head domain - the catalytic core - and a membrane F(1) domain - the membrane proton channel. These two domains are linked by a central stalk rotating inside the F(1) region and a stationary peripheral stalk. During catalysis, ATP synthesis in the catalytic domain of F(1) is coupled via a rotary mechanism of the central stalk subunits to proton translocation. In vivo, can only synthesize ATP although its ATP hydrolase activity can be activated artificially in vitro. Part of the complex F(0) domain. This Musophaga violacea (Violet turaco) protein is ATP synthase F(0) complex subunit 8.